A 624-amino-acid chain; its full sequence is Leucine-rich repeat and IQ domain-containing protein 3 (624 aa).

LRR repeat units lie at residues 51–72 (SLRV…QSCI), 73–94 (KLIK…KFWN), and 98–119 (NLKL…CVLS). In terms of domain architecture, LRRCT spans 132-179 (CPVSLKKGYRHVLVNSIWPLKALDHHVISDEEIIQNWHLPERFKACNH). Residues 215–244 (HNSPVLIVQRWIRGFLVRKNLSPVFFHKKK) enclose the IQ domain. The stretch at 553 to 614 (KQKLKAEKYR…TKVAIVKTNL (62 aa)) forms a coiled coil.

The polypeptide is Leucine-rich repeat and IQ domain-containing protein 3 (LRRIQ3) (Homo sapiens (Human)).